The sequence spans 448 residues: U1 small nuclear ribonucleoprotein 70 kDa (448 aa).

The required for interaction with U1 RNA stretch occupies residues 91–201 (TEIKNATEDP…GGGLGGTRRG (111 aa)). The 79-residue stretch at 102–180 (RTLFIARINY…KRVLVDVERA (79 aa)) folds into the RRM domain. A disordered region spans residues 188 to 448 (PRRLGGGLGG…SSGDPSWWRQ (261 aa)). Residues 191–200 (LGGGLGGTRR) show a composition bias toward gly residues. 2 stretches are compositionally biased toward basic and acidic residues: residues 206-234 (NIKH…REGP) and 262-272 (ERRDRERDRGR). A compositionally biased stretch (basic residues) spans 281–293 (SRSRSRERRKRRA). 2 stretches are compositionally biased toward basic and acidic residues: residues 294–320 (GSRE…DRER) and 346–376 (RDRE…IKEE). The mediates binding to Psi stretch occupies residues 405 to 425 (RPPPAHHNMFSVPPPPILGRG). A compositionally biased stretch (polar residues) spans 426 to 448 (NASTNPNPDNGQQSSGDPSWWRQ).

As to quaternary structure, component of the U1 snRNP. Interacts with Psi; essential for alternative splicing of P-element transposase. Interacts with the SMN complex.

It localises to the nucleus speckle. Its subcellular location is the nucleus. It is found in the nucleoplasm. Mediates the splicing of pre-mRNA by binding to the stem loop I region of U1-snRNA. Required during oogenesis for nurse cell chromatin dispersal. The polypeptide is U1 small nuclear ribonucleoprotein 70 kDa (snRNP-U1-70K) (Drosophila melanogaster (Fruit fly)).